The chain runs to 576 residues: V-type ATP synthase alpha chain (576 aa).

Residue 238–245 participates in ATP binding; it reads GPFGAGKT.

Belongs to the ATPase alpha/beta chains family.

The enzyme catalyses ATP + H2O + 4 H(+)(in) = ADP + phosphate + 5 H(+)(out). In terms of biological role, produces ATP from ADP in the presence of a proton gradient across the membrane. The V-type alpha chain is a catalytic subunit. This chain is V-type ATP synthase alpha chain, found in Borrelia turicatae (strain 91E135).